The chain runs to 339 residues: Ketol-acid reductoisomerase (NADP(+)) (339 aa).

The KARI N-terminal Rossmann domain maps to 1–182 (MRVYYDRDAD…GGGRAGIIET (182 aa)). NADP(+) is bound by residues 24-27 (YGSQ), R48, S51, T53, and 83-86 (DELQ). The active site involves H108. G134 lines the NADP(+) pocket. Residues 183 to 328 (TFREECETDL…ARLREMMPWI (146 aa)) form the KARI C-terminal knotted domain. Mg(2+)-binding residues include D191, E195, E227, and E231. S252 is a binding site for substrate.

It belongs to the ketol-acid reductoisomerase family. Requires Mg(2+) as cofactor.

It catalyses the reaction (2R)-2,3-dihydroxy-3-methylbutanoate + NADP(+) = (2S)-2-acetolactate + NADPH + H(+). The enzyme catalyses (2R,3R)-2,3-dihydroxy-3-methylpentanoate + NADP(+) = (S)-2-ethyl-2-hydroxy-3-oxobutanoate + NADPH + H(+). It functions in the pathway amino-acid biosynthesis; L-isoleucine biosynthesis; L-isoleucine from 2-oxobutanoate: step 2/4. The protein operates within amino-acid biosynthesis; L-valine biosynthesis; L-valine from pyruvate: step 2/4. Its function is as follows. Involved in the biosynthesis of branched-chain amino acids (BCAA). Catalyzes an alkyl-migration followed by a ketol-acid reduction of (S)-2-acetolactate (S2AL) to yield (R)-2,3-dihydroxy-isovalerate. In the isomerase reaction, S2AL is rearranged via a Mg-dependent methyl migration to produce 3-hydroxy-3-methyl-2-ketobutyrate (HMKB). In the reductase reaction, this 2-ketoacid undergoes a metal-dependent reduction by NADPH to yield (R)-2,3-dihydroxy-isovalerate. The sequence is that of Ketol-acid reductoisomerase (NADP(+)) from Parvibaculum lavamentivorans (strain DS-1 / DSM 13023 / NCIMB 13966).